Consider the following 91-residue polypeptide: Non-specific lipid-transfer protein 1 (91 aa).

Cystine bridges form between Cys-3–Cys-50, Cys-13–Cys-27, Cys-28–Cys-73, and Cys-48–Cys-87.

Belongs to the plant LTP family.

Plant non-specific lipid-transfer proteins transfer phospholipids as well as galactolipids across membranes. May play a role in wax or cutin deposition in the cell walls of expanding epidermal cells and certain secretory tissues. The protein is Non-specific lipid-transfer protein 1 of Prunus armeniaca (Apricot).